We begin with the raw amino-acid sequence, 196 residues long: Peptidyl-tRNA hydrolase (196 aa).

Position 17 (tyrosine 17) interacts with tRNA. Histidine 22 functions as the Proton acceptor in the catalytic mechanism. 3 residues coordinate tRNA: phenylalanine 68, asparagine 70, and asparagine 116.

The protein belongs to the PTH family. As to quaternary structure, monomer.

Its subcellular location is the cytoplasm. It catalyses the reaction an N-acyl-L-alpha-aminoacyl-tRNA + H2O = an N-acyl-L-amino acid + a tRNA + H(+). Functionally, hydrolyzes ribosome-free peptidyl-tRNAs (with 1 or more amino acids incorporated), which drop off the ribosome during protein synthesis, or as a result of ribosome stalling. In terms of biological role, catalyzes the release of premature peptidyl moieties from peptidyl-tRNA molecules trapped in stalled 50S ribosomal subunits, and thus maintains levels of free tRNAs and 50S ribosomes. The sequence is that of Peptidyl-tRNA hydrolase from Yersinia pseudotuberculosis serotype O:1b (strain IP 31758).